The primary structure comprises 497 residues: Probable cytosol aminopeptidase (497 aa).

2 residues coordinate Mn(2+): Lys-262 and Asp-267. Residue Lys-274 is part of the active site. Mn(2+)-binding residues include Asp-285, Asp-344, and Glu-346. The active site involves Arg-348.

It belongs to the peptidase M17 family. Mn(2+) is required as a cofactor.

The protein localises to the cytoplasm. The catalysed reaction is Release of an N-terminal amino acid, Xaa-|-Yaa-, in which Xaa is preferably Leu, but may be other amino acids including Pro although not Arg or Lys, and Yaa may be Pro. Amino acid amides and methyl esters are also readily hydrolyzed, but rates on arylamides are exceedingly low.. The enzyme catalyses Release of an N-terminal amino acid, preferentially leucine, but not glutamic or aspartic acids.. Its function is as follows. Presumably involved in the processing and regular turnover of intracellular proteins. Catalyzes the removal of unsubstituted N-terminal amino acids from various peptides. In Rhizobium etli (strain ATCC 51251 / DSM 11541 / JCM 21823 / NBRC 15573 / CFN 42), this protein is Probable cytosol aminopeptidase.